The following is a 186-amino-acid chain: Dihydrofolate reductase (186 aa).

Residues 3 to 184 (PLNCIVAVSQ…IKYKFEVYEK (182 aa)) enclose the DHFR domain. NADP(+)-binding positions include A9 and 15 to 21 (GIGKNGD). Position 30-35 (30-35 (EYKYFQ)) interacts with substrate. The residue at position 32 (K32) is an N6-acetyllysine; alternate. Position 32 is an N6-succinyllysine; alternate (K32). An NADP(+)-binding site is contributed by 54-56 (RKT). R70 lines the substrate pocket. NADP(+) is bound by residues 76–78 (SRE) and 116–123 (GGSSVYKE). Residue C162 is modified to Cysteine derivative; partial.

The protein belongs to the dihydrofolate reductase family. Homodimer.

It localises to the mitochondrion. It is found in the cytoplasm. The enzyme catalyses (6S)-5,6,7,8-tetrahydrofolate + NADP(+) = 7,8-dihydrofolate + NADPH + H(+). It functions in the pathway cofactor biosynthesis; tetrahydrofolate biosynthesis; 5,6,7,8-tetrahydrofolate from 7,8-dihydrofolate: step 1/1. In terms of biological role, key enzyme in folate metabolism. Contributes to the de novo mitochondrial thymidylate biosynthesis pathway. Catalyzes an essential reaction for de novo glycine and purine synthesis, and for DNA precursor synthesis. Binds its own mRNA and that of DHFR2. The polypeptide is Dihydrofolate reductase (DHFR) (Sus scrofa (Pig)).